Consider the following 190-residue polypeptide: Threonylcarbamoyl-AMP synthase (190 aa).

In terms of domain architecture, YrdC-like spans 7–190 (LGSIAQAVDV…ALTGERFRQG (184 aa)).

This sequence belongs to the SUA5 family. TsaC subfamily.

The protein localises to the cytoplasm. It catalyses the reaction L-threonine + hydrogencarbonate + ATP = L-threonylcarbamoyladenylate + diphosphate + H2O. In terms of biological role, required for the formation of a threonylcarbamoyl group on adenosine at position 37 (t(6)A37) in tRNAs that read codons beginning with adenine. Catalyzes the conversion of L-threonine, HCO(3)(-)/CO(2) and ATP to give threonylcarbamoyl-AMP (TC-AMP) as the acyladenylate intermediate, with the release of diphosphate. The sequence is that of Threonylcarbamoyl-AMP synthase from Enterobacter sp. (strain 638).